The primary structure comprises 661 residues: 7-beta-hydroxy-3-oxochol-24-oyl-CoA 4-desaturase (661 aa).

FMN is bound at residue Gln104. 168 to 171 is a binding site for substrate; it reads HCAH. Catalysis depends on Tyr173, which acts as the Proton donor. FMN-binding positions include Arg222, Lys298, and 320-321; that span reads GR. 4 residues coordinate [4Fe-4S] cluster: Cys344, Cys347, Cys351, and Cys363. Residues Gly394, Glu413, Gln421, Lys431, and Ala458 each coordinate FAD.

In the N-terminal section; belongs to the NADH:flavin oxidoreductase/NADH oxidase family. Homotrimer. The cofactor is FMN. Requires FAD as cofactor. It depends on [4Fe-4S] cluster as a cofactor.

It carries out the reaction 7beta-hydroxy-3-oxochol-24-oyl-CoA + NAD(+) = 7beta-hydroxy-3-oxochol-4-en-24-oyl-CoA + NADH + H(+). Its pathway is lipid metabolism; bile acid degradation. Activity is inhibited by sulfhydryl-reactive compounds, acriflavine, o-phenanthroline and EDTA. In terms of biological role, NADH-dependent flavin oxidoreductase. Stereo-specific NAD(H)-dependent 3-oxo-delta4-cholenoic acid oxidoreductase involved in bile acid 7beta-dehydroxylation. In Clostridium scindens (strain JCM 10418 / VPI 12708), this protein is 7-beta-hydroxy-3-oxochol-24-oyl-CoA 4-desaturase.